Here is a 186-residue protein sequence, read N- to C-terminus: Pyridoxal 5'-phosphate synthase subunit PdxT (186 aa).

Residue 46–48 (GES) participates in L-glutamine binding. Cysteine 78 acts as the Nucleophile in catalysis. L-glutamine-binding positions include arginine 105 and 134–135 (IR). Catalysis depends on charge relay system residues histidine 170 and glutamate 172.

Belongs to the glutaminase PdxT/SNO family. In terms of assembly, in the presence of PdxS, forms a dodecamer of heterodimers. Only shows activity in the heterodimer.

The catalysed reaction is aldehydo-D-ribose 5-phosphate + D-glyceraldehyde 3-phosphate + L-glutamine = pyridoxal 5'-phosphate + L-glutamate + phosphate + 3 H2O + H(+). It carries out the reaction L-glutamine + H2O = L-glutamate + NH4(+). Its pathway is cofactor biosynthesis; pyridoxal 5'-phosphate biosynthesis. Catalyzes the hydrolysis of glutamine to glutamate and ammonia as part of the biosynthesis of pyridoxal 5'-phosphate. The resulting ammonia molecule is channeled to the active site of PdxS. In Clostridium acetobutylicum (strain ATCC 824 / DSM 792 / JCM 1419 / IAM 19013 / LMG 5710 / NBRC 13948 / NRRL B-527 / VKM B-1787 / 2291 / W), this protein is Pyridoxal 5'-phosphate synthase subunit PdxT.